The following is a 517-amino-acid chain: Protein disulfide-isomerase A5 (517 aa).

Residues 1–21 (MARAWGLLLAIGVILPTWLSS) form the signal peptide. 4 disulfide bridges follow: Cys-83–Cys-92, Cys-180–Cys-183, Cys-303–Cys-306, and Cys-424–Cys-427. 3 consecutive Thioredoxin domains span residues 132–259 (FLKD…NPQP), 268–382 (PWAD…NPEA), and 376–504 (WMQN…TLRE). A Prevents secretion from ER motif is present at residues 514 to 517 (REDL).

The protein belongs to the protein disulfide isomerase family.

The protein localises to the endoplasmic reticulum lumen. The catalysed reaction is Catalyzes the rearrangement of -S-S- bonds in proteins.. This is Protein disulfide-isomerase A5 (Pdia5) from Rattus norvegicus (Rat).